A 222-amino-acid polypeptide reads, in one-letter code: Putative metal transport protein MJ1569 (222 aa).

Transmembrane regions (helical) follow at residues 3–23, 39–59, 81–101, 102–122, 135–155, and 180–200; these read IPDGYLGPITCAFFYLIMIPI, LPLLGVLTAFSFLVMMFNLPV, WVATIAISIVLIIQAIFFGDG, GITCIGANCFNMGVVLPFVGY, VIASGIGAYVGIVAAAIVAGF, and AFAHLITAGPAAAVVTAIVVW.

It belongs to the CbiM family.

Its subcellular location is the cell membrane. Its function is as follows. May be involved in metal transport. The sequence is that of Putative metal transport protein MJ1569 from Methanocaldococcus jannaschii (strain ATCC 43067 / DSM 2661 / JAL-1 / JCM 10045 / NBRC 100440) (Methanococcus jannaschii).